The following is a 368-amino-acid chain: MAKKRVGIIFGGKSAEHEVSLQSAKNIVEAIDKDRFDVTLIGIDKQGQWHINEASNFLLNADNPALIELNKSNQGVALIPGKEDRQLVGTANQSVLDQLDVVFPIVHGTLGEDGSLQGMFRLANLPFVGSNVLGSAVSMDKDIAKRLLQGAGLHVASGLTFTRAAKETIDFESIADQLGLPLFIKPANQGSSVGVNKATTEAEFTAAIEEAFSYDHKVLIEAAIKGREIECAVLGNDYPKASTCGEILPQDGFYSYDAKYIDEDGAKLAIPADLPEDVNRRIQDIAIQAYKTLNCEGLARVDVFLTETGEVIINEVNTLPGFTKISMYPKLWEASGVSYQDLITTLIELAIERHERDKQLKSSVFDRN.

Positions 145–348 constitute an ATP-grasp domain; it reads KRLLQGAGLH…YQDLITTLIE (204 aa). An ATP-binding site is contributed by 175 to 230; sequence ADQLGLPLFIKPANQGSSVGVNKATTEAEFTAAIEEAFSYDHKVLIEAAIKGREIE. Mg(2+) is bound by residues D302, E315, and N317.

This sequence belongs to the D-alanine--D-alanine ligase family. Mg(2+) is required as a cofactor. It depends on Mn(2+) as a cofactor.

The protein resides in the cytoplasm. The enzyme catalyses 2 D-alanine + ATP = D-alanyl-D-alanine + ADP + phosphate + H(+). The protein operates within cell wall biogenesis; peptidoglycan biosynthesis. Cell wall formation. The protein is D-alanine--D-alanine ligase of Shouchella clausii (strain KSM-K16) (Alkalihalobacillus clausii).